The following is a 414-amino-acid chain: eIF5-mimic protein 1 (414 aa).

The tract at residues 1–22 is disordered; the sequence is MNKNQKPVLTGQRFKTRKRDEK. The W2 domain occupies 248–414; the sequence is VQQSLGTRKE…LQNAEEEFRI (167 aa).

Belongs to the BZW family.

Its subcellular location is the cytoplasm. In terms of biological role, translation initiation regulator which may repress non-AUG initiated translation and repeat-associated non-AUG (RAN) initiated translation by acting as a competitive inhibitor of eukaryotic translation initiation factor 5 (EIF5) function. In Gallus gallus (Chicken), this protein is eIF5-mimic protein 1 (BZW2).